The primary structure comprises 394 residues: uncharacterized protein (394 aa).

Helical transmembrane passes span 10-30 (PALI…NYYA), 50-70 (FIVT…VPLG), 79-99 (IVSM…SQSL), 100-120 (AMMI…QILV), 138-158 (TIMS…GLLA), 166-186 (VFWV…RGLP), 218-238 (LLGC…AFLL), 243-263 (FNYS…GALG), 291-311 (WLAI…ILVL), 337-357 (LTAG…LISA), and 364-384 (GWAG…LVWW).

Belongs to the major facilitator superfamily.

It is found in the cell inner membrane. This is an uncharacterized protein from Escherichia coli (strain K12).